A 195-amino-acid polypeptide reads, in one-letter code: Imidazoleglycerol-phosphate dehydratase (195 aa).

The protein belongs to the imidazoleglycerol-phosphate dehydratase family.

The protein resides in the cytoplasm. The enzyme catalyses D-erythro-1-(imidazol-4-yl)glycerol 3-phosphate = 3-(imidazol-4-yl)-2-oxopropyl phosphate + H2O. The protein operates within amino-acid biosynthesis; L-histidine biosynthesis; L-histidine from 5-phospho-alpha-D-ribose 1-diphosphate: step 6/9. The chain is Imidazoleglycerol-phosphate dehydratase from Sphingopyxis alaskensis (strain DSM 13593 / LMG 18877 / RB2256) (Sphingomonas alaskensis).